A 228-amino-acid polypeptide reads, in one-letter code: NADH-quinone oxidoreductase subunit C (228 aa).

This sequence belongs to the complex I 30 kDa subunit family. As to quaternary structure, NDH-1 is composed of 14 different subunits. Subunits NuoB, C, D, E, F, and G constitute the peripheral sector of the complex.

It is found in the cell membrane. It catalyses the reaction a quinone + NADH + 5 H(+)(in) = a quinol + NAD(+) + 4 H(+)(out). Functionally, NDH-1 shuttles electrons from NADH, via FMN and iron-sulfur (Fe-S) centers, to quinones in the respiratory chain. The immediate electron acceptor for the enzyme in this species is believed to be a menaquinone. Couples the redox reaction to proton translocation (for every two electrons transferred, four hydrogen ions are translocated across the cytoplasmic membrane), and thus conserves the redox energy in a proton gradient. This is NADH-quinone oxidoreductase subunit C from Mycobacteroides abscessus (strain ATCC 19977 / DSM 44196 / CCUG 20993 / CIP 104536 / JCM 13569 / NCTC 13031 / TMC 1543 / L948) (Mycobacterium abscessus).